Consider the following 385-residue polypeptide: Multidrug resistance protein MdtE (385 aa).

The N-terminal stretch at 1 to 20 (MNRRRKLLIPLLFCGAMLTA) is a signal peptide. Cysteine 21 carries N-palmitoyl cysteine lipidation. Cysteine 21 carries the S-diacylglycerol cysteine lipid modification.

The protein belongs to the membrane fusion protein (MFP) (TC 8.A.1) family. Homotrimer. Part of the tripartite efflux system MdtEF-TolC, which is composed of an inner membrane transporter, MdtF, a membrane fusion protein, MdtE, and an outer membrane component, TolC. The complex forms a large protein conduit and can translocate molecules across both the inner and outer membranes.

The protein localises to the cell inner membrane. In terms of biological role, part of the tripartite efflux system MdtEF-TolC, which confers resistance to various compounds. This Escherichia coli O6:H1 (strain CFT073 / ATCC 700928 / UPEC) protein is Multidrug resistance protein MdtE (mdtE).